We begin with the raw amino-acid sequence, 340 residues long: uncharacterized protein (340 aa).

An N-terminal signal peptide occupies residues 1–23 (MQKKVLSLVLVLAVLESIVPVSA).

This is an uncharacterized protein from Archaeoglobus fulgidus (strain ATCC 49558 / DSM 4304 / JCM 9628 / NBRC 100126 / VC-16).